Consider the following 155-residue polypeptide: Small ribosomal subunit protein uS7 (155 aa).

It belongs to the universal ribosomal protein uS7 family. Part of the 30S ribosomal subunit. Contacts proteins S9 and S11.

Functionally, one of the primary rRNA binding proteins, it binds directly to 16S rRNA where it nucleates assembly of the head domain of the 30S subunit. Is located at the subunit interface close to the decoding center, probably blocks exit of the E-site tRNA. The chain is Small ribosomal subunit protein uS7 from Xanthomonas campestris pv. campestris (strain 8004).